Reading from the N-terminus, the 265-residue chain is Small ribosomal subunit protein eS1 (265 aa).

Positions 234–256 (EGSTTTSKGVTSEGGEKVDRVDG) are disordered. Over residues 247–256 (GGEKVDRVDG) the composition is skewed to basic and acidic residues.

The protein belongs to the eukaryotic ribosomal protein eS1 family. In terms of assembly, component of the small ribosomal subunit. Mature ribosomes consist of a small (40S) and a large (60S) subunit. The 40S subunit contains about 33 different proteins and 1 molecule of RNA (18S). The 60S subunit contains about 49 different proteins and 3 molecules of RNA (28S, 5.8S and 5S).

Its subcellular location is the cytoplasm. This chain is Small ribosomal subunit protein eS1, found in Aplysia californica (California sea hare).